Reading from the N-terminus, the 130-residue chain is Small ribosomal subunit protein uS9 (130 aa).

This sequence belongs to the universal ribosomal protein uS9 family.

In Desulfosudis oleivorans (strain DSM 6200 / JCM 39069 / Hxd3) (Desulfococcus oleovorans), this protein is Small ribosomal subunit protein uS9.